The sequence spans 97 residues: ESAT-6-like protein EsxG (97 aa).

The residue at position 2 (S2) is an N-acetylserine.

The protein belongs to the WXG100 family. CFP-10 subfamily. In terms of assembly, forms a tight 1:1 complex with EsxH.

It is found in the secreted. EsxG, in complex with EsxH, disrupts ESCRT function and impairs host phagosome maturation, thereby promoting intracellular bacterial growth. The complex acts by interacting, via EsxH, with the host hepatocyte growth factor-regulated tyrosine kinase substrate (HGS/HRS), a component of the ESCRT machinery. EsxG stabilizes EsxH in the host cytosol. The sequence is that of ESAT-6-like protein EsxG from Mycobacterium tuberculosis (strain ATCC 25618 / H37Rv).